The sequence spans 300 residues: ATP-dependent (S)-NAD(P)H-hydrate dehydratase (300 aa).

The YjeF C-terminal domain occupies Tyr-6–Leu-297. (6S)-NADPHX-binding positions include Gly-106 and Asn-158–Arg-164. Residues Lys-188–Asp-192 and Gly-218–Gly-227 each bind ATP. Asp-228 is a binding site for (6S)-NADPHX.

The protein belongs to the NnrD/CARKD family. Mg(2+) is required as a cofactor.

The enzyme catalyses (6S)-NADHX + ATP = ADP + phosphate + NADH + H(+). It carries out the reaction (6S)-NADPHX + ATP = ADP + phosphate + NADPH + H(+). In terms of biological role, catalyzes the dehydration of the S-form of NAD(P)HX at the expense of ATP, which is converted to ADP. Together with NAD(P)HX epimerase, which catalyzes the epimerization of the S- and R-forms, the enzyme allows the repair of both epimers of NAD(P)HX, a damaged form of NAD(P)H that is a result of enzymatic or heat-dependent hydration. The polypeptide is ATP-dependent (S)-NAD(P)H-hydrate dehydratase (Pediculus humanus subsp. corporis (Body louse)).